Consider the following 230-residue polypeptide: Orotidine 5'-phosphate decarboxylase (230 aa).

Substrate-binding positions include aspartate 10, lysine 31, 58–67, threonine 117, arginine 179, glutamine 188, glycine 208, and arginine 209; that span reads DLKLHDIPNT. The active-site Proton donor is the lysine 60.

It belongs to the OMP decarboxylase family. Type 1 subfamily. Homodimer.

The enzyme catalyses orotidine 5'-phosphate + H(+) = UMP + CO2. It participates in pyrimidine metabolism; UMP biosynthesis via de novo pathway; UMP from orotate: step 2/2. Its function is as follows. Catalyzes the decarboxylation of orotidine 5'-monophosphate (OMP) to uridine 5'-monophosphate (UMP). The polypeptide is Orotidine 5'-phosphate decarboxylase (Staphylococcus epidermidis (strain ATCC 12228 / FDA PCI 1200)).